We begin with the raw amino-acid sequence, 529 residues long: MFPGARILATLTLALHLLHGTHAAIGPTGDMYIVNEDVSPDGFTRSAVVARSDPTTNGTSETLTGVLVQGNKGDNFQLNVLNQLSDTTMLKTTSIHWHGFFQSGSTWADGPAFVNQCPIASGNSFLYDFNVPDQAGTFWYHSHLSTQYCDGLRGPFIVYDPSDPHLSLYDVDNADTIITLEDWYHVVAPQNAVLPTADSTLINGKGRFAGGPTSALAVINVESNKRYRFRLISMSCDPNFTFSIDGHSLQVIEADAVNIVPIVVDSIQIFAGQRYSFVLNANQTVDNYWIRADPNLGSTGFDGGINSAILRYAGATEDDPTTTSSTSTPLEETNLVPLENPGAPGPAVPGGADININLAMAFDVTNFELTINGSPFKAPTAPVLLQILSGATTAASLLPSGSIYSLEANKVVEISIPALAVGGPHPFHLHGHTFDVIRSAGSTTYNFDTPARRDVVNTGTDANDNVTIRFVTDNPGPWFLHCHIDWHLEIGLAVVFAEDVTSITAPPAAWDDLCPIYDALSDSDKGGIA.

Positions 1-23 are cleaved as a signal peptide; it reads MFPGARILATLTLALHLLHGTHA. Plastocyanin-like domains follow at residues 25–159, 170–312, and 380–499; these read IGPT…FIVY, DVDN…ILRY, and TAPV…FAED. N-linked (GlcNAc...) asparagine glycosylation occurs at Asn57. His96, His98, His141, and His143 together coordinate Cu cation. Cystine bridges form between Cys117–Cys514 and Cys149–Cys236. Asn239 and Asn282 each carry an N-linked (GlcNAc...) asparagine glycan. Residues His425, His428, His430, His481, Cys482, His483, and His487 each coordinate Cu cation.

It belongs to the multicopper oxidase family. The cofactor is Cu cation.

It localises to the secreted. The catalysed reaction is 4 hydroquinone + O2 = 4 benzosemiquinone + 2 H2O. Lignin degradation and detoxification of lignin-derived products. This Pleurotus ostreatus (Oyster mushroom) protein is Laccase-1 (POX1).